Here is a 95-residue protein sequence, read N- to C-terminus: Small ubiquitin-related modifier 2 (95 aa).

K11 is covalently cross-linked (Glycyl lysine isopeptide (Lys-Gly) (interchain with G-Cter in SUMO)). The region spanning 16–95 (DHINLKVAGQ…VFQQQTGGSF (80 aa)) is the Ubiquitin-like domain. G93 is covalently cross-linked (Glycyl lysine isopeptide (Gly-Lys) (interchain with K-? in acceptor proteins)). Residues 94 to 95 (SF) constitute a propeptide that is removed on maturation.

The protein belongs to the ubiquitin family. SUMO subfamily. Interacts with sae2 and ube2i. Covalently attached to a number of proteins, including top2. Post-translationally, polymeric chains can be formed through Lys-11 cross-linking. Cleavage of precursor form by a sentrin-specific protease is necessary for function.

The protein localises to the nucleus. Its function is as follows. Ubiquitin-like protein that can be covalently attached to proteins as a monomer or as a lysine-linked polymer. Covalent attachment via an isopeptide bond to its substrates requires prior activation by the E1 complex sae1-sae2 and linkage to the E2 enzyme ube2i, and can be promoted by an E3 ligase such as pias1-4. This post-translational modification on lysine residues of proteins plays a crucial role in a number of cellular processes such as nuclear transport, DNA replication and repair, mitosis and signal transduction. Polymeric sumo2 chains are also susceptible to polyubiquitination which functions as a signal for proteasomal degradation of modified proteins. This Xenopus tropicalis (Western clawed frog) protein is Small ubiquitin-related modifier 2 (sumo2).